We begin with the raw amino-acid sequence, 83 residues long: Cytochrome b559 subunit alpha (83 aa).

Residues 21 to 35 (VIHSITIPSLFIAGW) form a helical membrane-spanning segment. H23 is a heme binding site.

It belongs to the PsbE/PsbF family. Heterodimer of an alpha subunit and a beta subunit. PSII is composed of 1 copy each of membrane proteins PsbA, PsbB, PsbC, PsbD, PsbE, PsbF, PsbH, PsbI, PsbJ, PsbK, PsbL, PsbM, PsbT, PsbX, PsbY, PsbZ, Psb30/Ycf12, at least 3 peripheral proteins of the oxygen-evolving complex and a large number of cofactors. It forms dimeric complexes. It depends on heme b as a cofactor.

It is found in the plastid. Its subcellular location is the chloroplast thylakoid membrane. In terms of biological role, this b-type cytochrome is tightly associated with the reaction center of photosystem II (PSII). PSII is a light-driven water:plastoquinone oxidoreductase that uses light energy to abstract electrons from H(2)O, generating O(2) and a proton gradient subsequently used for ATP formation. It consists of a core antenna complex that captures photons, and an electron transfer chain that converts photonic excitation into a charge separation. This is Cytochrome b559 subunit alpha from Agrostis stolonifera (Creeping bentgrass).